Here is a 229-residue protein sequence, read N- to C-terminus: tRNA (guanine-N(7)-)-methyltransferase (229 aa).

S-adenosyl-L-methionine contacts are provided by Glu59, Glu84, Asp111, and Asp134. The active site involves Asp134. Residues Lys138, Asp170, and Thr205 to Glu208 each bind substrate.

This sequence belongs to the class I-like SAM-binding methyltransferase superfamily. TrmB family.

It catalyses the reaction guanosine(46) in tRNA + S-adenosyl-L-methionine = N(7)-methylguanosine(46) in tRNA + S-adenosyl-L-homocysteine. It functions in the pathway tRNA modification; N(7)-methylguanine-tRNA biosynthesis. In terms of biological role, catalyzes the formation of N(7)-methylguanine at position 46 (m7G46) in tRNA. This is tRNA (guanine-N(7)-)-methyltransferase from Nitrosospira multiformis (strain ATCC 25196 / NCIMB 11849 / C 71).